Reading from the N-terminus, the 142-residue chain is Large ribosomal subunit protein uL11 (142 aa).

The protein belongs to the universal ribosomal protein uL11 family. As to quaternary structure, part of the ribosomal stalk of the 50S ribosomal subunit. Interacts with L10 and the large rRNA to form the base of the stalk. L10 forms an elongated spine to which L12 dimers bind in a sequential fashion forming a multimeric L10(L12)X complex. In terms of processing, one or more lysine residues are methylated.

In terms of biological role, forms part of the ribosomal stalk which helps the ribosome interact with GTP-bound translation factors. In Serratia marcescens, this protein is Large ribosomal subunit protein uL11.